The chain runs to 363 residues: S-adenosylmethionine:tRNA ribosyltransferase-isomerase (363 aa).

The protein belongs to the QueA family. In terms of assembly, monomer.

It localises to the cytoplasm. It catalyses the reaction 7-aminomethyl-7-carbaguanosine(34) in tRNA + S-adenosyl-L-methionine = epoxyqueuosine(34) in tRNA + adenine + L-methionine + 2 H(+). It functions in the pathway tRNA modification; tRNA-queuosine biosynthesis. Transfers and isomerizes the ribose moiety from AdoMet to the 7-aminomethyl group of 7-deazaguanine (preQ1-tRNA) to give epoxyqueuosine (oQ-tRNA). The sequence is that of S-adenosylmethionine:tRNA ribosyltransferase-isomerase from Synechococcus sp. (strain RCC307).